A 1323-amino-acid chain; its full sequence is Tetratricopeptide repeat protein 21 homolog (1323 aa).

17 TPR repeats span residues 56–89 (VPLAILKGVCLVLLGKIPEAIRHLEAFSNDQNFS), 411–444 (ESPFYYLIASVLAKHSKDKSFENFRQHIENLIEM), 580–613 (SLYHLIKSKTFKKRNENDEALKTLKMALQIPKKE), 667–700 (HQLVIAQAQLYLTKGHTEKALAILRKIQPGQSNF), 702–735 (LSRIRMAEIYLEEKKDKRMFAACYRELLKVEPTP), 736–768 (GSYSLLGDAFMKVQEPEDAINFYEQALKMQSKD), 770–802 (QLAEKIGEAYVMAHLYSKAVNFYESSMNIYKDK), 804–835 (MRLKLANLLLRLKNYEKCEKILRAPLDREPEP), 845–878 (IQFLLLLAECHEMVENIPEAMKDFEKAKSLHNKI), 892–925 (ARICNLQAELYYRRHEFPPAIEVCKQALQFYETD), 927–959 (KSNLLLSRIYKDENKWTLVLQPCQAVLQVDPHN), 961–993 (EANLILADFYYIKSEADHAMTSYITLLNKNPLH), 995–1027 (HALFRVVELYCRKGEHHKADEFLNSARDANPRC), 1031–1064 (AGYSVCRGRFEWYTGDQSQALRCYSRAKDSPNVV), 1203–1236 (EKCWLLMAEIYVGASKWEQAGTYLDQVLKYNCNS), 1238–1270 (RAFELYGQAKEKEQKYVEASKIYEKAFNTTNQK), and 1272–1305 (CSFGYKLAFTLLKTRRLFLCIETCQKVLDINPQY).

This sequence belongs to the TTC21 family.

The polypeptide is Tetratricopeptide repeat protein 21 homolog (Caenorhabditis briggsae).